Reading from the N-terminus, the 381-residue chain is MSLNMFWFLPTHGDGHYLGTEEGSRPVDHGYLQQIAQAADRLGYTGVLIPTGRSCEDAWLVAASMIPVTQRLKFLVALRPSVTSPTVAARQAATLDRLSNGRALFNLVTGSDPQELAGDGVFLDHSERYEASAEFTQVWRRLLLGETVNFNGKHIHVRGAKLLFPPIQQPYPPLYFGGSSDVAQELAAEQVDLYLTWGEPPELVKEKIEQVRAKAAAYGRKIRFGIRLHVIVRETNDEAWQAAERLISHLDDETIAKAQAAFARTDSVGQQRMAALHNGKRDNLEISPNLWAGVGLVRGGAGTALVGDGPTVAARINEYAALGIDSFVLSGYPHLEEAYRVGELLFPHLDVAIPEIPQPQPLNPQGEAVANDFIPRKVAQS.

It belongs to the SsuD family. In terms of assembly, homotetramer.

It carries out the reaction an alkanesulfonate + FMNH2 + O2 = an aldehyde + FMN + sulfite + H2O + 2 H(+). In terms of biological role, catalyzes the desulfonation of aliphatic sulfonates. This is Alkanesulfonate monooxygenase from Shigella flexneri.